An 87-amino-acid polypeptide reads, in one-letter code: Defensin-like protein 223 (87 aa).

The N-terminal stretch at 1–34 is a signal peptide; sequence MKSTIFVLTLLIFVSLYFNIIVYVSFSFIGTSEI. Disulfide bonds link Cys55–Cys72, Cys58–Cys77, and Cys62–Cys79.

This sequence belongs to the DEFL family.

Its subcellular location is the secreted. This chain is Defensin-like protein 223, found in Arabidopsis thaliana (Mouse-ear cress).